Reading from the N-terminus, the 232-residue chain is LexA repressor (232 aa).

The segment covering 1-10 has biased composition (polar residues); it reads MDDSNDSSSA. Residues 1 to 22 form a disordered region; it reads MDDSNDSSSAGPDGRLHAVDPS. The H-T-H motif DNA-binding region spans 47 to 67; it reads IREIGDAVGLTSTSSVAHQLR. Residues S156 and K193 each act as for autocatalytic cleavage activity in the active site.

This sequence belongs to the peptidase S24 family. As to quaternary structure, homodimer.

It carries out the reaction Hydrolysis of Ala-|-Gly bond in repressor LexA.. Its function is as follows. Represses a number of genes involved in the response to DNA damage (SOS response), including recA and lexA. In the presence of single-stranded DNA, RecA interacts with LexA causing an autocatalytic cleavage which disrupts the DNA-binding part of LexA, leading to derepression of the SOS regulon and eventually DNA repair. The protein is LexA repressor of Mycolicibacterium paratuberculosis (strain ATCC BAA-968 / K-10) (Mycobacterium paratuberculosis).